The primary structure comprises 361 residues: Free fatty acid receptor 4 (361 aa).

The disordered stretch occupies residues 1 to 21 (MSPECAQTTGPGPSRTPDQVN). Topologically, residues 1 to 45 (MSPECAQTTGPGPSRTPDQVNRTHFPFFSDVKGDHRLVLSVLETT) are extracellular. Asn21 is a glycosylation site (N-linked (GlcNAc...) asparagine). Residues 46-66 (VLGLIFVVSLLGNVCALVLVV) traverse the membrane as a helical segment. Over 67 to 77 (RRRRRGATVSL) the chain is Cytoplasmic. Residues 78-98 (VLNLFCADLLFTSAIPLVLVV) form a helical membrane-spanning segment. Over 99–103 (RWTEA) the chain is Extracellular. The helical transmembrane segment at 104-124 (WLLGPVVCHLLFYVMTMSGSV) threads the bilayer. Cys111 and Cys194 are joined by a disulfide. The Cytoplasmic segment spans residues 125 to 156 (TILTLAAVSLERMVCIVRLRRGLSGPGRRTQA). The helical transmembrane segment at 157–177 (ALLAFIWGYSALAALPLCILF) threads the bilayer. Residues 178–204 (RVVPQRLPGGDQEIPICTLDWPNRIGE) are Extracellular-facing. The helical transmembrane segment at 205–225 (ISWDVFFVTLNFLVPGLVIVI) threads the bilayer. The Cytoplasmic portion of the chain corresponds to 226–268 (SYSKILQITKASRKRLTLSLAYSESHQIRVSQQDYRLFRTLFL). A helical transmembrane segment spans residues 269 to 289 (LMVSFFIMWSPIIITILLILI). The Extracellular portion of the chain corresponds to 290 to 295 (QNFRQD). A helical transmembrane segment spans residues 296-316 (LVIWPSLFFWVVAFTFANSAL). The Cytoplasmic segment spans residues 317-361 (NPILYNMSLFRSEWRKIFCCFFFPEKGAIFTETSIRRNDLSVIST). Phosphothreonine occurs at positions 347 and 349. 3 positions are modified to phosphoserine: Ser350, Ser357, and Ser360.

It belongs to the G-protein coupled receptor 1 family. Interacts (via C-terminus) with ARRB2 following LCFAs stimulation. In terms of processing, phosphorylated at two clusters of Ser and Thr residues located in the intracellular C-terminus. Prerequisite for FFAR4 internalization via an ARRB2-dependent pathway.

Its subcellular location is the cell membrane. It localises to the endosome membrane. The protein resides in the lysosome membrane. It is found in the cell projection. The protein localises to the cilium membrane. Functionally, G-protein-coupled receptor for long-chain fatty acids (LCFAs) with a major role in adipogenesis, energy metabolism and inflammation. Signals via G-protein and beta-arrestin pathways. LCFAs sensing initiates activation of phosphoinositidase C-linked G proteins GNAQ and GNA11 (G(q)/G(11)), inducing a variety of cellular responses via second messenger pathways such as intracellular calcium mobilization, modulation of cyclic adenosine monophosphate (cAMP) production, and mitogen-activated protein kinases (MAPKs). After LCFAs binding, associates with beta-arrestin ARRB2 that acts as an adapter protein coupling the receptor to specific downstream signaling pathways, as well as mediating receptor endocytosis. In response to dietary fats, plays an important role in the regulation of adipocyte proliferation and differentiation. Acts as a receptor for omega-3 polyunsaturated fatty acids (PUFAs) at primary cilium of perivascular preadipocytes, initiating an adipogenic program via cAMP and CTCF-dependent chromatin remodeling that ultimately results in transcriptional activation of adipogenic genes and cell cycle entry. Induces differentiation of brown and beige adipocytes probably via autocrine and endocrine functions of FGF21 hormone. Contributes to the thermogenic activation of brown adipose tissue and the browning of white adipose tissue. Activates brown adipocytes by initiating intracellular calcium signaling leading to mitochondrial depolarization and fission, and overall increased mitochondrial respiration. Consequently stimulates fatty acid uptake and oxidation in mitochondria together with UCP1-mediated thermogenic respiration, eventually reducing fat mass. Regulates bi-potential differentiation of bone marrow mesenchymal stem cells toward osteoblasts or adipocytes likely by up-regulating distinct integrins. In response to dietary fats regulates hormone secretion and appetite. Stimulates GIP and GLP1 secretion from enteroendocrine cells as well as GCG secretion in pancreatic alpha cells, thereby playing a role in the regulation of blood glucose levels. Negatively regulates glucose-induced SST secretion in pancreatic delta cells. Mediates LCFAs inhibition of GHRL secretion, an appetite-controlling hormone. In taste buds, contributes to sensing of dietary fatty acids by the gustatory system. During the inflammatory response, promotes anti-inflammatory M2 macrophage differentiation in adipose tissue. Mediates the anti-inflammatory effects of omega-3 PUFAs via inhibition of NLRP3 inflammasome activation. In this pathway, interacts with adapter protein ARRB2 and inhibits the priming step triggered by Toll-like receptors (TLRs) at the level of TAK1 and TAB1. Further inhibits the activation step when ARRB2 directly associates with NLRP3, leading to inhibition of pro-inflammatory cytokine release. Mediates LCFAs anti-apoptotic effects. The protein is Free fatty acid receptor 4 (Ffar4) of Rattus norvegicus (Rat).